A 651-amino-acid polypeptide reads, in one-letter code: Acetyl-coenzyme A synthetase (651 aa).

CoA-binding positions include 193–196 and Thr-312; that span reads RRGK. ATP-binding positions include 388 to 390, 412 to 417, Asp-501, and Arg-516; these read GEP and DTWWQT. Ser-524 contacts CoA. Residues Val-538, His-540, and Val-543 each coordinate Mg(2+). Lys-610 bears the N6-acetyllysine mark.

Belongs to the ATP-dependent AMP-binding enzyme family. It depends on Mg(2+) as a cofactor. In terms of processing, acetylated. Deacetylation by the SIR2-homolog deacetylase activates the enzyme.

The catalysed reaction is acetate + ATP + CoA = acetyl-CoA + AMP + diphosphate. In terms of biological role, catalyzes the conversion of acetate into acetyl-CoA (AcCoA), an essential intermediate at the junction of anabolic and catabolic pathways. AcsA undergoes a two-step reaction. In the first half reaction, AcsA combines acetate with ATP to form acetyl-adenylate (AcAMP) intermediate. In the second half reaction, it can then transfer the acetyl group from AcAMP to the sulfhydryl group of CoA, forming the product AcCoA. The chain is Acetyl-coenzyme A synthetase from Streptomyces coelicolor (strain ATCC BAA-471 / A3(2) / M145).